Reading from the N-terminus, the 298-residue chain is MNHIQDAFLNTLKVERNFSEHTLKSYQDDLIQFNQFLEQEHLELNTFEYRDARNYLSYLYSNHLKRTSVSRKISTLRTFYEYWMTLDENIINPFVQLVHPKKEKYLPQFFYEEEMEALFKTVEEDTSKNLRDRVILELLYATGIRVSELVNIKKQDIDFYANGVTVLGKGSKERFVPFGAYCRQSIENYLEHFKPIQSCNHDFLIVNMKGEAITERGVRYVLNDIVKRTAGVSEIHPHKLRHTFATHLLNQGADLRTVQSLLGHVNLSTTGKYTHVSNQQLRKVYLNAHPRAKKENET.

One can recognise a Core-binding (CB) domain in the interval 1 to 84 (MNHIQDAFLN…TLRTFYEYWM (84 aa)). Positions 105-286 (YLPQFFYEEE…SNQQLRKVYL (182 aa)) constitute a Tyr recombinase domain. Active-site residues include Arg-145, Lys-169, His-238, Arg-241, and His-264. Catalysis depends on Tyr-273, which acts as the O-(3'-phospho-DNA)-tyrosine intermediate.

Belongs to the 'phage' integrase family. XerC subfamily. In terms of assembly, forms a cyclic heterotetrameric complex composed of two molecules of XerC and two molecules of XerD.

Its subcellular location is the cytoplasm. Site-specific tyrosine recombinase, which acts by catalyzing the cutting and rejoining of the recombining DNA molecules. The XerC-XerD complex is essential to convert dimers of the bacterial chromosome into monomers to permit their segregation at cell division. It also contributes to the segregational stability of plasmids. The chain is Tyrosine recombinase XerC from Staphylococcus aureus (strain USA300).